A 418-amino-acid chain; its full sequence is MLHPRARTMLLLSLPAVAIGIASSLILIVVMKIASVLQNLLWQRLPGTLGIAQDSPLWIIGVLTLTGIAVGLVIRFSQGHAGPDPACEPLIGAPVPPSALPGLIVALILGLAGGVSLGPEHPIMTVNIALAVAIGARLLPRVNRMEWTILASAGTIGALFGTPVAAALIFSQTLNGSSEVPLWDRLFAPLMAAAAGALTTGLFFHPHFSLPIAHYGQMEMTDILSGAIVAAIAIAAGMVAVWCLPRLHAMMHQMKNPVLVLGIGGFILGILGVIGGPVSLFKGLDEMQQMVANQAFSTSDYFLLAVIKLAALVVAAASGFRGGRIFPAVFVGVALGLMLHEHVPAVPAAITVSCAILGIVLVVTRDGWLSLFMAAVVVPNTTLLPLLCIVMLPAWLLLAGKPMMMVNRPKQQPPHDNV.

11 helical membrane passes run 9 to 31 (MLLLSLPAVAIGIASSLILIVVM), 55 to 77 (SPLWIIGVLTLTGIAVGLVIRFS), 90 to 112 (LIGAPVPPSALPGLIVALILGLA), 122 to 140 (PIMTVNIALAVAIGARLLP), 147 to 169 (WTILASAGTIGALFGTPVAAALI), 189 to 211 (PLMAAAAGALTTGLFFHPHFSLP), 223 to 244 (ILSGAIVAAIAIAAGMVAVWCL), 259 to 281 (LVLGIGGFILGILGVIGGPVSLF), 301 to 323 (YFLLAVIKLAALVVAAASGFRGG), 343 to 363 (VPAVPAAITVSCAILGIVLVV), and 376 to 398 (VVVPNTTLLPLLCIVMLPAWLLL).

This sequence belongs to the chloride channel (TC 2.A.49) family.

The protein resides in the cell membrane. This Escherichia coli O157:H7 protein is Putative ion-transport protein YfeO (yfeO).